Here is a 163-residue protein sequence, read N- to C-terminus: Crossover junction endodeoxyribonuclease RuvC (163 aa).

Catalysis depends on residues aspartate 9, glutamate 76, and aspartate 148. Residues aspartate 9, glutamate 76, and aspartate 148 each coordinate Mg(2+).

This sequence belongs to the RuvC family. Homodimer which binds Holliday junction (HJ) DNA. The HJ becomes 2-fold symmetrical on binding to RuvC with unstacked arms; it has a different conformation from HJ DNA in complex with RuvA. In the full resolvosome a probable DNA-RuvA(4)-RuvB(12)-RuvC(2) complex forms which resolves the HJ. Mg(2+) is required as a cofactor.

The protein localises to the cytoplasm. It carries out the reaction Endonucleolytic cleavage at a junction such as a reciprocal single-stranded crossover between two homologous DNA duplexes (Holliday junction).. Its function is as follows. The RuvA-RuvB-RuvC complex processes Holliday junction (HJ) DNA during genetic recombination and DNA repair. Endonuclease that resolves HJ intermediates. Cleaves cruciform DNA by making single-stranded nicks across the HJ at symmetrical positions within the homologous arms, yielding a 5'-phosphate and a 3'-hydroxyl group; requires a central core of homology in the junction. The consensus cleavage sequence is 5'-(A/T)TT(C/G)-3'. Cleavage occurs on the 3'-side of the TT dinucleotide at the point of strand exchange. HJ branch migration catalyzed by RuvA-RuvB allows RuvC to scan DNA until it finds its consensus sequence, where it cleaves and resolves the cruciform DNA. In Nostoc punctiforme (strain ATCC 29133 / PCC 73102), this protein is Crossover junction endodeoxyribonuclease RuvC.